Consider the following 286-residue polypeptide: tRNA pseudouridine synthase B (286 aa).

Asp40 functions as the Nucleophile in the catalytic mechanism.

Belongs to the pseudouridine synthase TruB family. Type 1 subfamily.

The enzyme catalyses uridine(55) in tRNA = pseudouridine(55) in tRNA. Responsible for synthesis of pseudouridine from uracil-55 in the psi GC loop of transfer RNAs. The chain is tRNA pseudouridine synthase B from Mesoplasma florum (strain ATCC 33453 / NBRC 100688 / NCTC 11704 / L1) (Acholeplasma florum).